A 980-amino-acid polypeptide reads, in one-letter code: Putative formate dehydrogenase YrhE (980 aa).

A 2Fe-2S ferredoxin-type domain is found at 5-81 (KSISVRVDGT…GMSIDLSGNR (77 aa)). Residues Cys-39, Cys-50, Cys-53, and Cys-65 each contribute to the [2Fe-2S] cluster site. The 4Fe-4S His(Cys)3-ligated-type domain maps to 81–121 (RVKEAQTEAMDRLLENHLLYCTVCDNNNGNCTLHNTAEMMG). Positions 97, 101, 104, 111, 153, 156, 159, 163, 196, 199, 202, 206, 270, 273, 277, and 305 each coordinate [4Fe-4S] cluster. 2 consecutive 4Fe-4S ferredoxin-type domains span residues 144–171 (PFYR…VNET) and 187–216 (EGVP…EKSM). The tract at residues 258 to 980 (MRETRTKKTK…NRPGYVHLTD (723 aa)) is formate dehydrogenase. In terms of domain architecture, 4Fe-4S Mo/W bis-MGD-type spans 263-319 (TKKTKTVCTFCGVGCSFEVWTKGRDILKIQPVSDAPVNAISTCVKGKFGWDFVNSKE). The interval 944 to 980 (ETAPLPKTNPRNKKRHPQNGVEAERKWNRPGYVHLTD) is disordered.

This sequence in the C-terminal section; belongs to the prokaryotic molybdopterin-containing oxidoreductase family. [2Fe-2S] cluster serves as cofactor. The cofactor is [4Fe-4S] cluster. Mo-bis(molybdopterin guanine dinucleotide) is required as a cofactor.

The enzyme catalyses formate + NAD(+) = CO2 + NADH. This Bacillus subtilis (strain 168) protein is Putative formate dehydrogenase YrhE (yrhE).